The following is a 241-amino-acid chain: Eukaryotic translation initiation factor 3 subunit J (241 aa).

A disordered region spans residues 1 to 94; it reads MDVSWDADNF…EKTAEEMTPE (94 aa). Positions 26-45 are enriched in acidic residues; sequence GEDEDDNVKESWEDEEEEKK. Positions 61-118 form a coiled coil; sequence KKKIHDKIAERERQEREKAERLVTEKTAEEMTPEQKLAEKLRQQKLQEESDLRLAMET. Residues 66 to 89 show a composition bias toward basic and acidic residues; that stretch reads DKIAERERQEREKAERLVTEKTAE.

The protein belongs to the eIF-3 subunit J family. In terms of assembly, component of the eukaryotic translation initiation factor 3 (eIF-3) complex.

The protein localises to the cytoplasm. Functionally, component of the eukaryotic translation initiation factor 3 (eIF-3) complex, which is involved in protein synthesis of a specialized repertoire of mRNAs and, together with other initiation factors, stimulates binding of mRNA and methionyl-tRNAi to the 40S ribosome. The eIF-3 complex specifically targets and initiates translation of a subset of mRNAs involved in cell proliferation. The polypeptide is Eukaryotic translation initiation factor 3 subunit J (Bombyx mori (Silk moth)).